A 331-amino-acid polypeptide reads, in one-letter code: NADH-quinone oxidoreductase subunit H (331 aa).

A run of 8 helical transmembrane segments spans residues 7 to 27 (ALVT…AVVI), 81 to 101 (MIFT…FAIV), 114 to 134 (IGIL…LFAG), 154 to 174 (ISYE…VGSF), 187 to 207 (VWFI…GVAV), 238 to 258 (FFVG…TLFF), 271 to 291 (WLSF…FILI), and 310 to 330 (VCLP…LAAA).

It belongs to the complex I subunit 1 family. As to quaternary structure, NDH-1 is composed of 13 different subunits. Subunits NuoA, H, J, K, L, M, N constitute the membrane sector of the complex.

Its subcellular location is the cell inner membrane. The catalysed reaction is a quinone + NADH + 5 H(+)(in) = a quinol + NAD(+) + 4 H(+)(out). Functionally, NDH-1 shuttles electrons from NADH, via FMN and iron-sulfur (Fe-S) centers, to quinones in the respiratory chain. The immediate electron acceptor for the enzyme in this species is believed to be ubiquinone. Couples the redox reaction to proton translocation (for every two electrons transferred, four hydrogen ions are translocated across the cytoplasmic membrane), and thus conserves the redox energy in a proton gradient. This subunit may bind ubiquinone. This Pseudomonas paraeruginosa (strain DSM 24068 / PA7) (Pseudomonas aeruginosa (strain PA7)) protein is NADH-quinone oxidoreductase subunit H.